The following is a 352-amino-acid chain: RNA 3'-terminal phosphate cyclase (352 aa).

Residues glutamine 100 and 297 to 301 (HLADQ) contribute to the ATP site. Histidine 322 serves as the catalytic Tele-AMP-histidine intermediate.

Belongs to the RNA 3'-terminal cyclase family. Type 1 subfamily.

Its subcellular location is the cytoplasm. It catalyses the reaction a 3'-end 3'-phospho-ribonucleotide-RNA + ATP = a 3'-end 2',3'-cyclophospho-ribonucleotide-RNA + AMP + diphosphate. In terms of biological role, catalyzes the conversion of 3'-phosphate to a 2',3'-cyclic phosphodiester at the end of RNA. The mechanism of action of the enzyme occurs in 3 steps: (A) adenylation of the enzyme by ATP; (B) transfer of adenylate to an RNA-N3'P to produce RNA-N3'PP5'A; (C) and attack of the adjacent 2'-hydroxyl on the 3'-phosphorus in the diester linkage to produce the cyclic end product. The biological role of this enzyme is unknown but it is likely to function in some aspects of cellular RNA processing. The protein is RNA 3'-terminal phosphate cyclase of Methanosarcina mazei (strain ATCC BAA-159 / DSM 3647 / Goe1 / Go1 / JCM 11833 / OCM 88) (Methanosarcina frisia).